The following is a 1300-amino-acid chain: uncharacterized protein (1300 aa).

A signal peptide spans Met1 to Ala26. The N-palmitoyl cysteine moiety is linked to residue Cys27. A lipid anchor (S-diacylglycerol cysteine) is attached at Cys27. The segment covering Ala464–Thr478 has biased composition (low complexity). Disordered stretches follow at residues Ala464–Asn487, Ala620–Glu639, Asp774–Lys797, and Lys1244–Thr1269. Composition is skewed to polar residues over residues Ala620–Thr637 and Asp774–Lys783. The segment covering Pro785–Lys797 has biased composition (basic and acidic residues). Positions Thr1257–Thr1269 are enriched in basic residues.

Belongs to the MG307/MG309/MG338 family.

Its subcellular location is the cell membrane. This is an uncharacterized protein from Mycoplasma pneumoniae (strain ATCC 29342 / M129 / Subtype 1) (Mycoplasmoides pneumoniae).